The primary structure comprises 337 residues: Protein-methionine-sulfoxide reductase catalytic subunit MsrP (337 aa).

Positions 1-54 (MLIKLPRSSECKASEITPEGIYLSRRTLLGGSLAGLALGALPGGVGAAQMSRYA) form a signal peptide, tat-type signal. Mo-molybdopterin is bound by residues N94, 97–98 (YE), C152, T187, N237, R242, and 253–255 (SIK).

Belongs to the MsrP family. Heterodimer of a catalytic subunit (MsrP) and a heme-binding subunit (MsrQ). The cofactor is Mo-molybdopterin. In terms of processing, predicted to be exported by the Tat system. The position of the signal peptide cleavage has not been experimentally proven.

The protein localises to the periplasm. The catalysed reaction is L-methionyl-[protein] + a quinone + H2O = L-methionyl-(S)-S-oxide-[protein] + a quinol. It catalyses the reaction L-methionyl-[protein] + a quinone + H2O = L-methionyl-(R)-S-oxide-[protein] + a quinol. Its function is as follows. Part of the MsrPQ system that repairs oxidized periplasmic proteins containing methionine sulfoxide residues (Met-O), using respiratory chain electrons. Thus protects these proteins from oxidative-stress damage caused by reactive species of oxygen and chlorine generated by the host defense mechanisms. MsrPQ is essential for the maintenance of envelope integrity under bleach stress, rescuing a wide series of structurally unrelated periplasmic proteins from methionine oxidation. The catalytic subunit MsrP is non-stereospecific, being able to reduce both (R-) and (S-) diastereoisomers of methionine sulfoxide. This is Protein-methionine-sulfoxide reductase catalytic subunit MsrP from Pseudomonas putida (strain ATCC 47054 / DSM 6125 / CFBP 8728 / NCIMB 11950 / KT2440).